Consider the following 645-residue polypeptide: Acetyl-coenzyme A synthetase (645 aa).

CoA contacts are provided by residues 190–193 (RGGR) and T308. ATP-binding positions include 384-386 (GEP), 408-413 (DTWWQT), D497, and R512. S520 is a CoA binding site. R523 is a binding site for ATP. Mg(2+) contacts are provided by V534, H536, and V539. K606 bears the N6-acetyllysine mark.

This sequence belongs to the ATP-dependent AMP-binding enzyme family. Mg(2+) is required as a cofactor. Post-translationally, acetylated. Deacetylation by the SIR2-homolog deacetylase activates the enzyme.

It catalyses the reaction acetate + ATP + CoA = acetyl-CoA + AMP + diphosphate. Its function is as follows. Catalyzes the conversion of acetate into acetyl-CoA (AcCoA), an essential intermediate at the junction of anabolic and catabolic pathways. AcsA undergoes a two-step reaction. In the first half reaction, AcsA combines acetate with ATP to form acetyl-adenylate (AcAMP) intermediate. In the second half reaction, it can then transfer the acetyl group from AcAMP to the sulfhydryl group of CoA, forming the product AcCoA. The polypeptide is Acetyl-coenzyme A synthetase (Alkalilimnicola ehrlichii (strain ATCC BAA-1101 / DSM 17681 / MLHE-1)).